A 101-amino-acid chain; its full sequence is NAD(P)H-quinone oxidoreductase subunit 4L, chloroplastic (101 aa).

3 helical membrane passes run 2-22, 32-52, and 61-81; these read MLEH…YGLI, MCLE…SDLF, and VFSI…PAIV.

It belongs to the complex I subunit 4L family. As to quaternary structure, NDH is composed of at least 16 different subunits, 5 of which are encoded in the nucleus.

The protein resides in the plastid. It localises to the chloroplast thylakoid membrane. The enzyme catalyses a plastoquinone + NADH + (n+1) H(+)(in) = a plastoquinol + NAD(+) + n H(+)(out). It carries out the reaction a plastoquinone + NADPH + (n+1) H(+)(in) = a plastoquinol + NADP(+) + n H(+)(out). NDH shuttles electrons from NAD(P)H:plastoquinone, via FMN and iron-sulfur (Fe-S) centers, to quinones in the photosynthetic chain and possibly in a chloroplast respiratory chain. The immediate electron acceptor for the enzyme in this species is believed to be plastoquinone. Couples the redox reaction to proton translocation, and thus conserves the redox energy in a proton gradient. This is NAD(P)H-quinone oxidoreductase subunit 4L, chloroplastic from Nuphar advena (Common spatterdock).